Here is a 554-residue protein sequence, read N- to C-terminus: Thermosome subunit alpha (554 aa).

Residues 530 to 554 (PKKKEKKGKTGEEEEEEGGGSKFEF) form a disordered region.

Belongs to the TCP-1 chaperonin family. As to quaternary structure, forms a Heterooligomeric complex of two stacked eight-membered rings.

Functionally, molecular chaperone; binds unfolded polypeptides in vitro, and has a weak ATPase activity. The chain is Thermosome subunit alpha (thsA) from Aeropyrum pernix (strain ATCC 700893 / DSM 11879 / JCM 9820 / NBRC 100138 / K1).